We begin with the raw amino-acid sequence, 164 residues long: Small ribosomal subunit protein uS5 (164 aa).

Positions 10–73 (IEERVVAINR…ESAKKNMIEV (64 aa)) constitute an S5 DRBM domain.

This sequence belongs to the universal ribosomal protein uS5 family. Part of the 30S ribosomal subunit. Contacts proteins S4 and S8.

Its function is as follows. With S4 and S12 plays an important role in translational accuracy. Functionally, located at the back of the 30S subunit body where it stabilizes the conformation of the head with respect to the body. The chain is Small ribosomal subunit protein uS5 from Streptococcus suis (strain 98HAH33).